Reading from the N-terminus, the 185-residue chain is Ribosome-recycling factor (185 aa).

This sequence belongs to the RRF family.

The protein localises to the cytoplasm. Responsible for the release of ribosomes from messenger RNA at the termination of protein biosynthesis. May increase the efficiency of translation by recycling ribosomes from one round of translation to another. This Ehrlichia ruminantium (strain Gardel) protein is Ribosome-recycling factor.